The sequence spans 186 residues: Transcriptional repressor NrdR (186 aa).

The tract at residues 1 to 24 (MRCPYCGGLDTQVKDSRPSDDASA) is disordered. A zinc finger lies at 3–34 (CPYCGGLDTQVKDSRPSDDASAIRRRRICPDC). Residues 12–24 (QVKDSRPSDDASA) are compositionally biased toward basic and acidic residues. In terms of domain architecture, ATP-cone spans 49 to 139 (LTVVKRSGRR…VYKNFREARD (91 aa)). Residues 146-186 (RLNGAGRPGGEPEPPDEAAPGPAAAPGEGGEAPARRARSRA) form a disordered region.

Belongs to the NrdR family. It depends on Zn(2+) as a cofactor.

Functionally, negatively regulates transcription of bacterial ribonucleotide reductase nrd genes and operons by binding to NrdR-boxes. The sequence is that of Transcriptional repressor NrdR from Methylobacterium sp. (strain 4-46).